The sequence spans 734 residues: Photosystem I P700 chlorophyll a apoprotein A2 (734 aa).

The next 8 helical transmembrane spans lie at 46–69, 135–158, 175–199, 273–291, 330–353, 369–395, 417–439, and 517–535; these read IFAS…FHVA, LYTG…LHLQ, LNHH…HVAI, IAHH…GHMY, IHFQ…QHMY, AALY…IFFI, AIKS…LYVH, and FLVH…LILV. The [4Fe-4S] cluster site is built by Cys-559 and Cys-568. The next 2 helical transmembrane spans lie at 575 to 596 and 643 to 665; these read AFYL…YWHW and LSVW…MFLI. Residues His-654, Met-662, and Tyr-670 each contribute to the chlorophyll a site. A phylloquinone-binding site is contributed by Trp-671. The helical transmembrane segment at 707 to 727 threads the bilayer; the sequence is LVGLAHFSVGYIFTYAAFLIA.

Belongs to the PsaA/PsaB family. As to quaternary structure, the PsaA/B heterodimer binds the P700 chlorophyll special pair and subsequent electron acceptors. PSI consists of a core antenna complex that captures photons, and an electron transfer chain that converts photonic excitation into a charge separation. The eukaryotic PSI reaction center is composed of at least 11 subunits. P700 is a chlorophyll a/chlorophyll a' dimer, A0 is one or more chlorophyll a, A1 is one or both phylloquinones and FX is a shared 4Fe-4S iron-sulfur center. serves as cofactor.

It is found in the plastid. Its subcellular location is the chloroplast thylakoid membrane. It catalyses the reaction reduced [plastocyanin] + hnu + oxidized [2Fe-2S]-[ferredoxin] = oxidized [plastocyanin] + reduced [2Fe-2S]-[ferredoxin]. Functionally, psaA and PsaB bind P700, the primary electron donor of photosystem I (PSI), as well as the electron acceptors A0, A1 and FX. PSI is a plastocyanin-ferredoxin oxidoreductase, converting photonic excitation into a charge separation, which transfers an electron from the donor P700 chlorophyll pair to the spectroscopically characterized acceptors A0, A1, FX, FA and FB in turn. Oxidized P700 is reduced on the lumenal side of the thylakoid membrane by plastocyanin. In Liriodendron tulipifera (Tuliptree), this protein is Photosystem I P700 chlorophyll a apoprotein A2.